We begin with the raw amino-acid sequence, 969 residues long: Alpha-glucosidase (969 aa).

Residues 1–24 form the signal peptide; sequence MMISTAYQSLFLTALFSAISIAVG. N-linked (GlcNAc...) asparagine glycans are attached at residues N37, N67, N99, N116, N139, N146, N209, N245, N249, N331, N406, N429, N462, and N470. D481 acts as the Nucleophile in catalysis. The active site involves E484. N520, N523, and N589 each carry an N-linked (GlcNAc...) asparagine glycan. The active-site Proton donor is D647. Residues N648, N801, N810, N821, N885, N915, N934, N942, N954, and N966 are each glycosylated (N-linked (GlcNAc...) asparagine).

Belongs to the glycosyl hydrolase 31 family.

It is found in the secreted. The catalysed reaction is Hydrolysis of terminal, non-reducing (1-&gt;4)-linked alpha-D-glucose residues with release of alpha-D-glucose.. Its function is as follows. Hydrolyzes malto-oligosaccharides, but has a low activity toward soluble starch. The protein is Alpha-glucosidase (agl1) of Schizosaccharomyces pombe (strain 972 / ATCC 24843) (Fission yeast).